The following is a 503-amino-acid chain: Probable cytosol aminopeptidase (503 aa).

Mn(2+) contacts are provided by Lys-271 and Asp-276. Lys-283 is a catalytic residue. The Mn(2+) site is built by Asp-294, Asp-353, and Glu-355. Arg-357 is a catalytic residue.

The protein belongs to the peptidase M17 family. Mn(2+) serves as cofactor.

The protein localises to the cytoplasm. It carries out the reaction Release of an N-terminal amino acid, Xaa-|-Yaa-, in which Xaa is preferably Leu, but may be other amino acids including Pro although not Arg or Lys, and Yaa may be Pro. Amino acid amides and methyl esters are also readily hydrolyzed, but rates on arylamides are exceedingly low.. The catalysed reaction is Release of an N-terminal amino acid, preferentially leucine, but not glutamic or aspartic acids.. Functionally, presumably involved in the processing and regular turnover of intracellular proteins. Catalyzes the removal of unsubstituted N-terminal amino acids from various peptides. In Chlorobaculum parvum (strain DSM 263 / NCIMB 8327) (Chlorobium vibrioforme subsp. thiosulfatophilum), this protein is Probable cytosol aminopeptidase.